Reading from the N-terminus, the 336-residue chain is NmrA-like family domain-containing oxidoreductase FrzB (336 aa).

Lysine 135 contacts NADP(+).

It belongs to the NmrA-type oxidoreductase family.

The enzyme catalyses 4-{[(2S,5S)-5-[(4-hydroxyphenyl)methyl]-2,5-dihydropyrazin-2-yl]methyl}phenol + 2 NADPH + 2 H(+) = (S,S)-2,5-di-(p-hydroxybenzyl)piperazine + 2 NADP(+). The protein operates within secondary metabolite biosynthesis. Functionally, nmrA-like family domain-containing oxidoreductase; part of the gene cluster that mediates the biosynthesis of the alkaloid (-)-FR901483, a potent immunosuppressant that shows efficacy in animal models and a probable inhibitor of purine nucleotide biosynthesis by targeting phosphoribosylpyrophosphate amidotransferase (PPAT). Within the pathway, FrzB catalyzes the reduction of 4-{[(2S,5S)-5-[(4-hydroxyphenyl)methyl]-2,5-dihydropyrazin-2-yl]methyl}phenol to produce the (S,S)-dityrosyl-piperazine intermediate. The biosynthesis of (-)-FR901483 starts with the condensation of two L-tyrosines to yield (S,S)-dityrosyl-piperazine. This process occurs in 3 steps with the non-canonical nonribosomal peptide synthetase FrzA catalyzing the reduction of L-tyrosine into L-tyrosinal, the spontaneous condensation of 2 L-tyrosinal units, and the subsequent reduction by the NmrA-like family domain-containing oxidoreductase FrzB. The cytochrome P450 monooxygenase FrzC then performs coupling between N10 and C1' to morph the piperazine into a 1,4-diazabicyclo[3.2.1]octane spiro-fused to a 2,5-cyclohexadienone. The dienone portion is further reduced to cyclohexanone by the flavin-dependent reductase FrzD. The methyltranserases (MTs) FrzE and FrzF are then involved in the methylation at the C10' amine and the C4 phenolic oxygen, respectively. The order of the two MTs appear to be interchangeable. Cleavage of the C9-N10' bond by the dioxygenase FrzG then leads to formation of a conjugated iminium. In addition to the oxidation of C9, an additional dehydrogenation between C7 and C8 can occur to give a likely shunt product. The next biosynthetic step is the intramolecular aldol condensation catalyzed by the newly identified aldolase FrzH to yield an aza-tricyclic product with the formation of a C9-C3' bond. The short-chain dehydrogenase/reductase FrzI then produces dephospho-(-)-FR901483 that is phosphorylated at C4'-OH into (-)-FR901483 by the phosphotransferase FrzJ. The protein is NmrA-like family domain-containing oxidoreductase FrzB of Cladobotryum sp.